A 162-amino-acid chain; its full sequence is Ribosomal RNA large subunit methyltransferase H (162 aa).

G108 contributes to the S-adenosyl-L-methionine binding site.

It belongs to the RNA methyltransferase RlmH family. In terms of assembly, homodimer.

It is found in the cytoplasm. The enzyme catalyses pseudouridine(1915) in 23S rRNA + S-adenosyl-L-methionine = N(3)-methylpseudouridine(1915) in 23S rRNA + S-adenosyl-L-homocysteine + H(+). Specifically methylates the pseudouridine at position 1915 (m3Psi1915) in 23S rRNA. This chain is Ribosomal RNA large subunit methyltransferase H, found in Methylobacterium sp. (strain 4-46).